Here is a 161-residue protein sequence, read N- to C-terminus: Nucleotide-binding protein PBPRA2024 (161 aa).

It belongs to the YajQ family.

In terms of biological role, nucleotide-binding protein. In Photobacterium profundum (strain SS9), this protein is Nucleotide-binding protein PBPRA2024.